Reading from the N-terminus, the 352-residue chain is Speedy protein E16 (352 aa).

Positions 1–90 (MDRTETRFRK…EPEKELAPEP (90 aa)) are disordered. The span at 18-40 (ITTSRQPHPQNEQSPQRSTSGYS) shows a compositional bias: polar residues. Acidic residues predominate over residues 76-90 (DESEEEPEKELAPEP).

Belongs to the Speedy/Ringo family.

This Homo sapiens (Human) protein is Speedy protein E16.